The sequence spans 130 residues: GKVYGRCELAAAMKRMGLDNYRGYSLGNWVCAAKFESNFNTGATNRNTDGSTDYGILQINSRWWCNDGRTPGSKNLCHIPCSALLSSDITASVNCAKKIVSDGDGMNAWVAWRKHCKGTDVNVWIRGCRL.

One can recognise a C-type lysozyme domain in the interval 2 to 130; it reads KVYGRCELAA…VNVWIRGCRL (129 aa). 4 disulfide bridges follow: Cys-7/Cys-128, Cys-31/Cys-116, Cys-65/Cys-81, and Cys-77/Cys-95. Residues Glu-36 and Asp-53 contribute to the active site.

The protein belongs to the glycosyl hydrolase 22 family. In terms of assembly, monomer.

It is found in the secreted. It catalyses the reaction Hydrolysis of (1-&gt;4)-beta-linkages between N-acetylmuramic acid and N-acetyl-D-glucosamine residues in a peptidoglycan and between N-acetyl-D-glucosamine residues in chitodextrins.. Its function is as follows. Lysozymes have primarily a bacteriolytic function; those in tissues and body fluids are associated with the monocyte-macrophage system and enhance the activity of immunoagents. The chain is Lysozyme C (LYZ) from Phasianus versicolor (Green pheasant).